A 135-amino-acid polypeptide reads, in one-letter code: RxLR effector protein Avr10 (135 aa).

The first 19 residues, 1–19 (MRLSFIIFAISLLAGGSGA), serve as a signal peptide directing secretion. A compositionally biased stretch (polar residues) spans 34–43 (GTNQGASTGK). Positions 34–64 (GTNQGASTGKRSLRYDNNAERAGEEDDEERA) are disordered. The RxLR-dEER motif lies at 44-63 (RSLRYDNNAERAGEEDDEER). Residues 46–55 (LRYDNNAERA) are compositionally biased toward basic and acidic residues.

This sequence belongs to the RxLR effector family.

Its subcellular location is the secreted. The protein localises to the host nucleus. The protein resides in the host cytoplasm. In terms of biological role, secreted effector that acts as an elicitor of hypersensitive response (HR) specifically on plants carrying defense protein R10. Enhances P.infestans colonization of Nicotiana benthamiana leaves. This is RxLR effector protein Avr10 from Phytophthora infestans (strain T30-4) (Potato late blight agent).